A 64-amino-acid chain; its full sequence is Large ribosomal subunit protein bL33c (64 aa).

This sequence belongs to the bacterial ribosomal protein bL33 family.

It localises to the plastid. Its subcellular location is the cyanelle. The protein is Large ribosomal subunit protein bL33c (rpl33) of Cyanophora paradoxa.